A 268-amino-acid polypeptide reads, in one-letter code: Small ribosomal subunit protein eS1 (268 aa).

Belongs to the eukaryotic ribosomal protein eS1 family. Component of the small ribosomal subunit. Mature ribosomes consist of a small (40S) and a large (60S) subunit. The 40S subunit contains about 33 different proteins and 1 molecule of RNA (18S). The 60S subunit contains about 49 different proteins and 3 molecules of RNA (28S, 5.8S and 5S).

The protein localises to the cytoplasm. The polypeptide is Small ribosomal subunit protein eS1 (Artemia franciscana (Brine shrimp)).